The primary structure comprises 251 residues: uncharacterized protein (251 aa).

4 helical membrane-spanning segments follow: residues 56-76 (LAVV…TLVA), 104-124 (IITV…FLLT), 184-204 (HGFV…LIIV), and 208-228 (YLIA…ANIS).

The protein resides in the membrane. This is an uncharacterized protein from Caenorhabditis elegans.